The sequence spans 365 residues: Keratin-associated protein 10-6 (365 aa).

Tandem repeats lie at residues 41–45, 46–50, 67–71, 89–93, 99–103, 109–113, 114–118, 119–123, 124–128, 129–133, 135–139, 145–149, 155–159, 160–164, 172–176, 186–190, 208–212, 218–222, 228–232, 233–237, 238–242, 250–254, 260–264, 270–274, 282–286, 292–296, 297–301, 316–320, and 334–338. Positions 41–338 are 29 X 5 AA repeats of C-C-X(3); sequence CCEPPCCAPA…SCQPSCCRTA (298 aa).

The protein belongs to the KRTAP type 10 family. As to quaternary structure, interacts with hair keratins. Restricted to a narrow region of the hair fiber cuticle, lying approximately 20 cell layers above the apex of the dermal papilla of the hair root; not detected in any other tissues.

In the hair cortex, hair keratin intermediate filaments are embedded in an interfilamentous matrix, consisting of hair keratin-associated proteins (KRTAP), which are essential for the formation of a rigid and resistant hair shaft through their extensive disulfide bond cross-linking with abundant cysteine residues of hair keratins. The matrix proteins include the high-sulfur and high-glycine-tyrosine keratins. The chain is Keratin-associated protein 10-6 (KRTAP10-6) from Homo sapiens (Human).